The primary structure comprises 60 residues: Ras-related protein Rab-2A (60 aa).

GTP-binding residues include Ser1, Cys2, and Thr19. Ser1 provides a ligand contact to Mg(2+). The Effector region motif lies at 16–24; the sequence is HDLTIGVEF. A Mg(2+)-binding site is contributed by Thr19.

It belongs to the small GTPase superfamily. Rab family. Interacts with PRKCI. Interacts with TRIP11. Interacts (in GTP-bound form) with GARIN1B. Interacts (GTP-bound) with HOPS complex component VPS39; interaction contributes to obtaining a functional HOPS complex that promotes autophagosome-lysosome membrane fusion driven by STX17-SNAP29-VAMP8. May interact with VPS41. Mg(2+) is required as a cofactor. In terms of processing, prenylated. Prenylation is required for association with cellular membranes.

The protein localises to the endoplasmic reticulum-Golgi intermediate compartment membrane. It localises to the melanosome. Its subcellular location is the endoplasmic reticulum membrane. It is found in the golgi apparatus membrane. The protein resides in the cytoplasmic vesicle. The protein localises to the secretory vesicle. It localises to the acrosome. Its subcellular location is the autophagosome membrane. The enzyme catalyses GTP + H2O = GDP + phosphate + H(+). Its activity is regulated as follows. Regulated by guanine nucleotide exchange factors (GEFs) which promote the exchange of bound GDP for free GTP, GTPase activating proteins (GAPs) which increase the GTP hydrolysis activity, and GDP dissociation inhibitors (GDIs) which inhibit the dissociation of the nucleotide from the GTPase. The small GTPases Rab are key regulators of intracellular membrane trafficking, from the formation of transport vesicles to their fusion with membranes. Rabs cycle between active GTP-bound and inactive GDP-bound states. In their active state, drive transport of vesicular carriers from donor organelles to acceptor organelles to regulate the membrane traffic that maintains organelle identity and morphology. RAB2A regulates autophagy by promoting autophagosome-lysosome fusion via recruitment of the HOPS endosomal tethering complex; this process involves autophagosomal RAB2A and lysosomal RAB39A recruitment of HOPS subcomplexes VPS39-VPS11 and VPS41-VPS16-VPS18-VPS33A, respectively, which assemble into a functional complex to mediate membrane tethering and SNAREs-driven membrane fusion. Required for protein transport from the endoplasmic reticulum to the Golgi complex. Regulates the compacted morphology of the Golgi. Together with RAB2B, redundantly required for efficient autophagic flux. This chain is Ras-related protein Rab-2A, found in Mesocricetus auratus (Golden hamster).